Reading from the N-terminus, the 94-residue chain is Protein RnfH (94 aa).

It belongs to the UPF0125 (RnfH) family.

This is Protein RnfH from Yersinia pestis bv. Antiqua (strain Antiqua).